The following is a 97-amino-acid chain: MQFTALVAALLSVAAVQAQRNPITITPQFDCGATNSQQYVARSGDTLTKIAQEIYHDVVGVCDIARANNLADPNRIDAGTPYTIPINCQTYDRNSCL.

Positions 1–18 (MQFTALVAALLSVAAVQA) are cleaved as a signal peptide. In terms of domain architecture, LysM spans 37-84 (QQYVARSGDTLTKIAQEIYHDVVGVCDIARANNLADPNRIDAGTPYTI). Positions 44, 48, 74, and 76 each coordinate chitin.

The protein belongs to the secreted LysM effector family. In terms of assembly, forms homodimers in a chitin-independent manner through interactions at the N-termini of Mg1LysM monomers. Homodimers are further polymerized in a chitin-dependent manner.

Its subcellular location is the secreted. The protein localises to the cell wall. Secreted effector that enables the plant pathogenic fungus to manipulate host defenses for successful infection. Binds chitin but not cellulose or xylan. Chitin-induced polymerization of homodimers forms a contiguous Mg1LysM highly oligomeric super-complexe that is anchored to the chitin in the fungal cell wall to prevent hydrolysis by host chitinases. The polypeptide is Secreted LysM effector Mg1LysM (Zymoseptoria tritici (strain ST99CH_3D7)).